A 426-amino-acid chain; its full sequence is Kelch repeat-containing protein At3g27220 (426 aa).

A helical transmembrane segment spans residues 18 to 38 (LMLVLYFTSVLGIGFIAAFLC). 5 Kelch repeats span residues 123–170 (LLYV…IVTD), 173–222 (YVYV…IWRG), 224–275 (LHVM…VAND), 276–338 (KLLV…WIIV), and 341–394 (SIVI…FWNG).

The protein localises to the membrane. The chain is Kelch repeat-containing protein At3g27220 from Arabidopsis thaliana (Mouse-ear cress).